The primary structure comprises 323 residues: tRNA U34 carboxymethyltransferase (323 aa).

Residues lysine 90, tryptophan 104, lysine 109, glycine 129, 182 to 183 (IE), methionine 197, tyrosine 201, and arginine 316 contribute to the carboxy-S-adenosyl-L-methionine site.

The protein belongs to the class I-like SAM-binding methyltransferase superfamily. CmoB family. As to quaternary structure, homotetramer.

It carries out the reaction carboxy-S-adenosyl-L-methionine + 5-hydroxyuridine(34) in tRNA = 5-carboxymethoxyuridine(34) in tRNA + S-adenosyl-L-homocysteine + H(+). Its function is as follows. Catalyzes carboxymethyl transfer from carboxy-S-adenosyl-L-methionine (Cx-SAM) to 5-hydroxyuridine (ho5U) to form 5-carboxymethoxyuridine (cmo5U) at position 34 in tRNAs. The chain is tRNA U34 carboxymethyltransferase from Idiomarina loihiensis (strain ATCC BAA-735 / DSM 15497 / L2-TR).